The sequence spans 201 residues: Holliday junction branch migration complex subunit RuvA (201 aa).

Residues 1–64 (MYAYIRGKLT…EDAQLLYGFI (64 aa)) are domain I. The domain II stretch occupies residues 65–143 (NEEEKDMFLS…ITRETTETLL (79 aa)). Residues 144-150 (SMNEENS) are flexible linker. Residues 151–201 (NSENLVKEALLALEALGYSKREISKVEKVLNKSTFDSVDEAVKLGLKTLVS) are domain III.

The protein belongs to the RuvA family. Homotetramer. Forms an RuvA(8)-RuvB(12)-Holliday junction (HJ) complex. HJ DNA is sandwiched between 2 RuvA tetramers; dsDNA enters through RuvA and exits via RuvB. An RuvB hexamer assembles on each DNA strand where it exits the tetramer. Each RuvB hexamer is contacted by two RuvA subunits (via domain III) on 2 adjacent RuvB subunits; this complex drives branch migration. In the full resolvosome a probable DNA-RuvA(4)-RuvB(12)-RuvC(2) complex forms which resolves the HJ.

The protein localises to the cytoplasm. In terms of biological role, the RuvA-RuvB-RuvC complex processes Holliday junction (HJ) DNA during genetic recombination and DNA repair, while the RuvA-RuvB complex plays an important role in the rescue of blocked DNA replication forks via replication fork reversal (RFR). RuvA specifically binds to HJ cruciform DNA, conferring on it an open structure. The RuvB hexamer acts as an ATP-dependent pump, pulling dsDNA into and through the RuvAB complex. HJ branch migration allows RuvC to scan DNA until it finds its consensus sequence, where it cleaves and resolves the cruciform DNA. This Staphylococcus haemolyticus (strain JCSC1435) protein is Holliday junction branch migration complex subunit RuvA.